Consider the following 288-residue polypeptide: 4-hydroxybenzoate octaprenyltransferase (288 aa).

8 helical membrane passes run 23-43 (IGSL…GRGI), 46-66 (AKIL…GCVV), 98-118 (ILFV…NSMT), 141-161 (LPQV…FAAV), 163-183 (ESLP…TVAY), 213-233 (LIIG…GWLM), 234-254 (NLGG…THQQ), and 268-288 (AFLN…ISYW).

Belongs to the UbiA prenyltransferase family. Requires Mg(2+) as cofactor.

Its subcellular location is the cell inner membrane. It catalyses the reaction all-trans-octaprenyl diphosphate + 4-hydroxybenzoate = 4-hydroxy-3-(all-trans-octaprenyl)benzoate + diphosphate. Its pathway is cofactor biosynthesis; ubiquinone biosynthesis. Functionally, catalyzes the prenylation of para-hydroxybenzoate (PHB) with an all-trans polyprenyl group. Mediates the second step in the final reaction sequence of ubiquinone-8 (UQ-8) biosynthesis, which is the condensation of the polyisoprenoid side chain with PHB, generating the first membrane-bound Q intermediate 3-octaprenyl-4-hydroxybenzoate. In Yersinia pestis bv. Antiqua (strain Antiqua), this protein is 4-hydroxybenzoate octaprenyltransferase.